An 89-amino-acid chain; its full sequence is MELSPELLRKLETLAKIRLSPEEEALLLQDLKRILDFVDALPRVEEGGAEEALGRLREDEPRPSLPQAEALALAPEAEDGFFRVPPVLE.

This sequence belongs to the GatC family. In terms of assembly, heterotrimer of A, B and C subunits.

It catalyses the reaction L-glutamyl-tRNA(Gln) + L-glutamine + ATP + H2O = L-glutaminyl-tRNA(Gln) + L-glutamate + ADP + phosphate + H(+). The enzyme catalyses L-aspartyl-tRNA(Asn) + L-glutamine + ATP + H2O = L-asparaginyl-tRNA(Asn) + L-glutamate + ADP + phosphate + 2 H(+). Its function is as follows. Allows the formation of correctly charged Asn-tRNA(Asn) or Gln-tRNA(Gln) through the transamidation of misacylated Asp-tRNA(Asn) or Glu-tRNA(Gln) in organisms which lack either or both of asparaginyl-tRNA or glutaminyl-tRNA synthetases. The reaction takes place in the presence of glutamine and ATP through an activated phospho-Asp-tRNA(Asn) or phospho-Glu-tRNA(Gln). This Thermus thermophilus (strain ATCC 27634 / DSM 579 / HB8) protein is Glutamyl-tRNA(Gln) amidotransferase subunit C.